The chain runs to 661 residues: MKDRFELVSKYQPQGDQPKAIEKLVKGIQEGKKHQTLLGATGTGKTFTVSNLIKEVNKPTLVIAHNKTLAGQLYSEFKEFFPNNAVEYFVSYYDYYQPEAYVPQTDTFIEKDASINDEIDKLRHSATSALFERRDVIIIASVSCIYGLGSPEEYREMVVSLRTEMEIERNELLRKLVDIQYARNDIDFQRGTFRVRGDVVEIFPASRDEHCVRVEFFGDEIERIREVDALTGEILGDRDHVAIFPASHFVTRAEKMEKAIQNIEKELEEQLKVMHENGKLLEAQRLEQRTRYDLEMMREMGFCSGIENYSRHLTLRPPGSTPYTLLDYFPDDFMIVVDESHVTIPQVRGMFNGDQARKQVLVDHGFRLPSALDNRPLRFEEFEKHMHNIVYVSATPGPYEIEHTDEMVEQIIRPTGLLDPLIDVRPIEGQIDDLIGEIQARIERNERVLVTTLTKKMSEDLTDYLKEIGIKVNYLHSEIKTLERIEIIRDLRLGKYDVLVGINLLREGLDIPEVSLVAILDADKEGFLRSERSLIQTIGRAARNAEGRVIMYADKITKSMEIAINETKRRREQQERFNEEHGITPKTINKEIRDVIRATVAAEDKAEYKTKAAPKLSKMTKKERQKVVEQMEHEMKEAAKALDFERAAELRDLLLELKAEG.

One can recognise a Helicase ATP-binding domain in the interval 26 to 413 (KGIQEGKKHQ…TDEMVEQIIR (388 aa)). Position 39-46 (39-46 (GATGTGKT)) interacts with ATP. The Beta-hairpin signature appears at 92–115 (YYDYYQPEAYVPQTDTFIEKDASI). Residues 430–596 (QIDDLIGEIQ…TINKEIRDVI (167 aa)) enclose the Helicase C-terminal domain. The UVR domain occupies 625-660 (QKVVEQMEHEMKEAAKALDFERAAELRDLLLELKAE).

Belongs to the UvrB family. Forms a heterotetramer with UvrA during the search for lesions. Interacts with UvrC in an incision complex.

It localises to the cytoplasm. Its function is as follows. The UvrABC repair system catalyzes the recognition and processing of DNA lesions. A damage recognition complex composed of 2 UvrA and 2 UvrB subunits scans DNA for abnormalities. Upon binding of the UvrA(2)B(2) complex to a putative damaged site, the DNA wraps around one UvrB monomer. DNA wrap is dependent on ATP binding by UvrB and probably causes local melting of the DNA helix, facilitating insertion of UvrB beta-hairpin between the DNA strands. Then UvrB probes one DNA strand for the presence of a lesion. If a lesion is found the UvrA subunits dissociate and the UvrB-DNA preincision complex is formed. This complex is subsequently bound by UvrC and the second UvrB is released. If no lesion is found, the DNA wraps around the other UvrB subunit that will check the other stand for damage. The protein is UvrABC system protein B of Bacillus subtilis (strain 168).